Reading from the N-terminus, the 273-residue chain is Putative phosphoenolpyruvate synthase regulatory protein (273 aa).

154-161 (GVSRSGKT) contacts ADP.

The protein belongs to the pyruvate, phosphate/water dikinase regulatory protein family. PSRP subfamily.

The enzyme catalyses [pyruvate, water dikinase] + ADP = [pyruvate, water dikinase]-phosphate + AMP + H(+). It catalyses the reaction [pyruvate, water dikinase]-phosphate + phosphate + H(+) = [pyruvate, water dikinase] + diphosphate. Bifunctional serine/threonine kinase and phosphorylase involved in the regulation of the phosphoenolpyruvate synthase (PEPS) by catalyzing its phosphorylation/dephosphorylation. The protein is Putative phosphoenolpyruvate synthase regulatory protein of Neisseria gonorrhoeae (strain ATCC 700825 / FA 1090).